The sequence spans 332 residues: MQSTESFHALPTRSDVEDPNERRKIQNRIAQKKHRQKMKRRIEELETKVNNQCQTSNWTSHAPTDSCQEQQFLDNTDFGLMLEDDLLYRELSASLDGAGLTAVAQMHDSPRPNQQQRLSVSGMPSSPTSTSNVAQRGLSIGDHSSASNHLSSLSLVPGSTEGSLPTRQHDNLCNQDLRDMVPEEKMSRILKVIQDAGYKDMDSFMTEYYVRDFDASSHVSAVQRQSRSRRLRGFLEQLRVGAESWSDYEAHDYQQEISKSAEAIYAKELDVFSTTTLGENASFQGLASLYRVLQSTVGSDIENHLRHEQSMMQRQVSEIVHRQVYTFNPAQC.

The disordered stretch occupies residues M1 to K37. The span at S14–K24 shows a compositional bias: basic and acidic residues. The bZIP domain maps to E17–N50. A basic motif region spans residues E21–E43. The interval L45–Q52 is leucine-zipper. A disordered region spans residues M106–D170. The segment covering R111–A134 has biased composition (polar residues). The segment covering H143–L155 has biased composition (low complexity). The span at T160–D170 shows a compositional bias: polar residues.

The protein belongs to the bZIP family.

The protein resides in the nucleus. Functionally, transcription factor that specifically controls transcription of the zearalenone biosynthesis cluster genes. The chain is Transcription factor ZEB2 from Gibberella zeae (strain ATCC MYA-4620 / CBS 123657 / FGSC 9075 / NRRL 31084 / PH-1) (Wheat head blight fungus).